An 848-amino-acid chain; its full sequence is MYLYIETLKQRLDAINQLRVDRALAAMGPTFQKVYSLLPTLLHCHHPLMPGYLDGNVPHGVCLFTPNETQQDYLSEVEAKWGEPLQQSVGGELPITGVYSMGSTSSIGQCHTSDLDVWVCHQAWLDSEERNRLQEKCSLLEKWAASMGVEVSFFLIDENRFRHNASGSLGGEDCGSTQHILLLDEFYRSAVRLAGKRILWNMVPVEEENNYDDYVLSLYAQGVLTPNEWLDLGGLSTLSAEEYFGASLWQLYKSIDSPYKAVLKTLLLEAYSWEYPNSQLLAMEIKQRLHAGEIVAFGLDAYCMMLDRVTRYLTQINDTTRLNLVRRCFYLKVCEKLSRSPASVGWRREILSQLVSEWGWSDESLAVLDNRANWKIERVREAHNELLDAMMQSYRNLIRFARRNNLSVSASPQDIGVLTRKLYAAFEALPGKVTLVNPQISPDLSEEHLTFIHVPAGRANRAGWYLYNQAPSMDAIVSHQPLEYNRYLNKLVSWAYFNGLLTSKTRLHIKSANLCDTVKLQELVTDISHHFPLRLPAPTPKALYSPCEIRHLAIIVNLEHDPTAAFRNQVVHFDFRKLDVFSFGEQQQCLVGSIDLLYRNSWNEVRTLHFSGEQAVLEALKTILGKMHQDAAPPESVDVFCYSQHLRGLIRTRIQQLVSECIELRLSSTRQEPGRFKAVRVSGHTWGLFFERLSVSVQKLENAVEFYGAISNNKLHGLSIQVETDQIHLPPVVDGFASEGIIQFFFEGTADEKGFNIYILDESNRVEVYHHCEGSKEALVRDVSRFYSSSHDRFTYGSSFINFNLPQFYQIVQLDGRTQVIPFRSNTLSHLYIVDREPSQPAQQFQLH.

Residues 1–535 (MYLYIETLKQ…DISHHFPLRL (535 aa)) are catalytic. The interval 541–848 (KALYSPCEIR…SQPAQQFQLH (308 aa)) is regulatory.

Belongs to the adenylyl cyclase class-1 family.

It localises to the cytoplasm. The catalysed reaction is ATP = 3',5'-cyclic AMP + diphosphate. The regulatory domain is involved in the regulation of cyclase activity by the carbon source. The polypeptide is Adenylate cyclase (cya) (Yersinia intermedia).